The following is a 206-amino-acid chain: Ribosomal RNA large subunit methyltransferase E (206 aa).

G60, W62, D80, D96, and D121 together coordinate S-adenosyl-L-methionine. K161 serves as the catalytic Proton acceptor.

It belongs to the class I-like SAM-binding methyltransferase superfamily. RNA methyltransferase RlmE family.

It is found in the cytoplasm. The catalysed reaction is uridine(2552) in 23S rRNA + S-adenosyl-L-methionine = 2'-O-methyluridine(2552) in 23S rRNA + S-adenosyl-L-homocysteine + H(+). Its function is as follows. Specifically methylates the uridine in position 2552 of 23S rRNA at the 2'-O position of the ribose in the fully assembled 50S ribosomal subunit. The protein is Ribosomal RNA large subunit methyltransferase E of Francisella tularensis subsp. holarctica (strain FTNF002-00 / FTA).